The sequence spans 258 residues: Beta carbonic anhydrase 3 (258 aa).

The N-terminal stretch at 1–28 (MSTESYEDAIKRLGELLSKKSDLGNVAA) is a signal peptide. Positions 24–54 (GNVAAAKIKKLTDELEELDSNKLDAVERIKS) form a coiled coil. At threonine 35 the chain carries Phosphothreonine. Serine 95 is subject to Phosphoserine. An S-nitrosocysteine modification is found at cysteine 201.

Belongs to the beta-class carbonic anhydrase family. As to expression, strongly expressed in aerial tissues including leaves, stems, flowers and siliques, and, to a lower extent, in roots.

The protein localises to the cytoplasm. It localises to the cytosol. The enzyme catalyses hydrogencarbonate + H(+) = CO2 + H2O. Reversible hydration of carbon dioxide. The chain is Beta carbonic anhydrase 3 (BCA3) from Arabidopsis thaliana (Mouse-ear cress).